We begin with the raw amino-acid sequence, 420 residues long: MKWYKKIGLLGIVGLTSVLLAACNKSKASQSKEDKVTIEYFNQKKEMDATLKKIIKDFERENPKIHVKMTSVPDAGTVLKTRVLSGDVPDVINIYPQNMDFQEWSKAGYFYNMTGKAYLNHLKNHYANEYKVNQKVYSVPLTANVSGIYYNKTKFKELGLKVPETWDEFVKLVEEIKAKKETPFALAGTEGWTLNGYHQLSLISVTGSANAANKYLRFSQPNSIKTSDKILKEDMVRLNLLADDGNQQKNWKGASYNDALVAFANEKALMTPNGSWALPAIKQQDPKFEIGTFAFPGKKTGNGITVGAGDLALSISAKTKHLKEAEKFVKYMTTARAMQKYYDVDGSPVAVKGVREDKNSPLQPLTKLAFTDKHYVWLGQHWNSEDDFFTATTNYLMTKNAKGLADGLNAFFNPMKADVD.

Positions 1–22 (MKWYKKIGLLGIVGLTSVLLAA) are cleaved as a signal peptide. Cys23 carries N-palmitoyl cysteine lipidation. Residue Cys23 is the site of S-diacylglycerol cysteine attachment.

It belongs to the bacterial solute-binding protein 1 family.

The protein localises to the cell membrane. Functionally, involved in a binding protein-dependent transport system responsible for the uptake of melibiose, raffinose and isomaltotriose. This chain is Multiple sugar-binding protein, found in Streptococcus mutans serotype c (strain ATCC 700610 / UA159).